Consider the following 189-residue polypeptide: Apolipoprotein D (189 aa).

The signal sequence occupies residues 1-20 (MVTMLMFLATLAGLFTTAKG). Q21 is modified (pyrrolidone carboxylic acid). Disulfide bonds link C28–C134 and C61–C185. N-linked (GlcNAc...) asparagine glycosylation is found at N65 and N98.

Belongs to the calycin superfamily. Lipocalin family. Homodimer. As to expression, highest levels of expression in brain, testis, virgin mammary gland and salivary gland. Moderate levels in skeletal muscle, lactating mammary gland and thymus. Low levels in lung and lymph node. No expression in kidney, pancreas, liver or spleen.

It is found in the secreted. Functionally, APOD occurs in the macromolecular complex with lecithin-transport and binding of bilin. Appears to be able to transport a variety of ligands in a number of different contexts. The chain is Apolipoprotein D (Apod) from Mus musculus (Mouse).